The following is a 165-amino-acid chain: Glutamyl-tRNA(Gln) amidotransferase subunit F, mitochondrial (165 aa).

The N-terminal 19 residues, 1–19 (MKSILRSTTRNLITSSRRF), are a transit peptide targeting the mitochondrion.

Belongs to the GatF family. In terms of assembly, subunit of the heterotrimeric GatFAB amidotransferase (AdT) complex, composed of A, B and F subunits.

The protein localises to the mitochondrion inner membrane. The enzyme catalyses L-glutamyl-tRNA(Gln) + L-glutamine + ATP + H2O = L-glutaminyl-tRNA(Gln) + L-glutamate + ADP + phosphate + H(+). Functionally, allows the formation of correctly charged Gln-tRNA(Gln) through the transamidation of misacylated Glu-tRNA(Gln) in the mitochondria. The reaction takes place in the presence of glutamine and ATP through an activated gamma-phospho-Glu-tRNA(Gln). Required for proper protein synthesis within the mitochondrion. The chain is Glutamyl-tRNA(Gln) amidotransferase subunit F, mitochondrial from Candida albicans (strain SC5314 / ATCC MYA-2876) (Yeast).